We begin with the raw amino-acid sequence, 508 residues long: Photosystem II CP47 reaction center protein (508 aa).

The next 6 membrane-spanning stretches (helical) occupy residues 21 to 36 (AVHI…WAGS), 101 to 115 (IVFS…IWHW), 140 to 156 (GIHL…FGAF), 203 to 218 (IAAG…FHLS), 237 to 252 (VLSS…AFVV), and 457 to 472 (SFAL…HGAR).

The protein belongs to the PsbB/PsbC family. PsbB subfamily. In terms of assembly, PSII is composed of 1 copy each of membrane proteins PsbA, PsbB, PsbC, PsbD, PsbE, PsbF, PsbH, PsbI, PsbJ, PsbK, PsbL, PsbM, PsbT, PsbX, PsbY, PsbZ, Psb30/Ycf12, at least 3 peripheral proteins of the oxygen-evolving complex and a large number of cofactors. It forms dimeric complexes. It depends on Binds multiple chlorophylls. PSII binds additional chlorophylls, carotenoids and specific lipids. as a cofactor.

It localises to the plastid. The protein localises to the chloroplast thylakoid membrane. One of the components of the core complex of photosystem II (PSII). It binds chlorophyll and helps catalyze the primary light-induced photochemical processes of PSII. PSII is a light-driven water:plastoquinone oxidoreductase, using light energy to abstract electrons from H(2)O, generating O(2) and a proton gradient subsequently used for ATP formation. In Nandina domestica (Heavenly bamboo), this protein is Photosystem II CP47 reaction center protein.